A 157-amino-acid polypeptide reads, in one-letter code: 2-C-methyl-D-erythritol 2,4-cyclodiphosphate synthase (157 aa).

A divalent metal cation-binding residues include aspartate 8 and histidine 10. 4-CDP-2-C-methyl-D-erythritol 2-phosphate contacts are provided by residues 8–10 (DVH) and 34–35 (HS). An a divalent metal cation-binding site is contributed by histidine 42. 4-CDP-2-C-methyl-D-erythritol 2-phosphate contacts are provided by residues 56–58 (DIG), 61–65 (FPDTD), 100–106 (AQAPKMA), 132–135 (TTTE), phenylalanine 139, and arginine 142.

Belongs to the IspF family. Homotrimer. It depends on a divalent metal cation as a cofactor.

The enzyme catalyses 4-CDP-2-C-methyl-D-erythritol 2-phosphate = 2-C-methyl-D-erythritol 2,4-cyclic diphosphate + CMP. It participates in isoprenoid biosynthesis; isopentenyl diphosphate biosynthesis via DXP pathway; isopentenyl diphosphate from 1-deoxy-D-xylulose 5-phosphate: step 4/6. Functionally, involved in the biosynthesis of isopentenyl diphosphate (IPP) and dimethylallyl diphosphate (DMAPP), two major building blocks of isoprenoid compounds. Catalyzes the conversion of 4-diphosphocytidyl-2-C-methyl-D-erythritol 2-phosphate (CDP-ME2P) to 2-C-methyl-D-erythritol 2,4-cyclodiphosphate (ME-CPP) with a corresponding release of cytidine 5-monophosphate (CMP). This Serratia proteamaculans (strain 568) protein is 2-C-methyl-D-erythritol 2,4-cyclodiphosphate synthase.